The following is a 90-amino-acid chain: N(2)-fixation sustaining protein CowN (90 aa).

The protein belongs to the CowN family.

In terms of biological role, is required to sustain N(2)-dependent growth in the presence of low levels of carbon monoxide (CO). Probably acts by protecting the N(2) fixation ability of the nitrogenase complex, which is inactivated in the presence of CO. The polypeptide is N(2)-fixation sustaining protein CowN (Halorhodospira halophila (strain DSM 244 / SL1) (Ectothiorhodospira halophila (strain DSM 244 / SL1))).